An 862-amino-acid polypeptide reads, in one-letter code: Solute carrier family 4 member 11 (862 aa).

Residues 1-343 (MSQNEHCQDS…IIGKSKSVGK (343 aa)) are Cytoplasmic-facing. A helical transmembrane segment spans residues 344–366 (YVTTTLFLYFACLLPTIAFGSLN). The Extracellular portion of the chain corresponds to 367-379 (DENTNGAIDVQKT). The helical transmembrane segment at 380–393 (IAGQSIGGLLYALF) threads the bilayer. At 394-398 (SGQPL) the chain is on the cytoplasmic side. A helical transmembrane segment spans residues 399–415 (VILLTTAPLAIYTQVIR). The Extracellular segment spans residues 416–428 (VICDDYNLDFNAF). The chain crosses the membrane as a helical span at residues 429-452 (YAWTGLWNSFFLALYAFLNLSLLM). Residues 453–460 (NLFKRSTE) lie on the Cytoplasmic side of the membrane. The chain crosses the membrane as a helical span at residues 461-481 (EIIALFISITFVLDAVKGMVK). Residues 482–542 (IFGKYYYGHH…SSPGSTHSGQ (61 aa)) are Extracellular-facing. 2 N-linked (GlcNAc...) asparagine glycosylation sites follow: Asn-511 and Asn-519. Residues 543–564 (ATAVLSLLIMLGTLWLGYTLYQ) form a helical membrane-spanning segment. Topologically, residues 565–577 (FKKSPYLHPCVRE) are cytoplasmic. The chain crosses the membrane as a helical span at residues 578-599 (TLSDCALPIAVLSFSLIGSYGF). The Extracellular segment spans residues 600–627 (QEIEMSKFRYNPSESLFEVAQIHSLSFK). A helical membrane pass occupies residues 628 to 645 (AIGSAMGLGFLLSLLFFI). Over 646–670 (EQNLVAALVNAPENRLVKGTAYHWD) the chain is Cytoplasmic. The helical transmembrane segment at 671-691 (LLLLAIINTGLSLFGLPWIHA) threads the bilayer. The Extracellular segment spans residues 692-721 (AYPHSPLHVRALALVEERVENGHIYETIVD). Residues 722-746 (VKETRLTALGASVLVGLSLLLLPFP) form a helical membrane-spanning segment. Residues 747-752 (LQWIPK) lie on the Cytoplasmic side of the membrane. A helical transmembrane segment spans residues 753–770 (PVLYGLFLYIALTSLDGN). Over 771-774 (QLFS) the chain is Extracellular. A helical transmembrane segment spans residues 775–797 (RVALLLKEQTSYPPTHYIRRVPQ). The Cytoplasmic portion of the chain corresponds to 798 to 802 (RKIHY). Residues 803 to 819 (FTGLQILQLLLLCAFGM) form a helical membrane-spanning segment. Residues 820-823 (SSLP) are Extracellular-facing. Residues 824-844 (YMKMVFPLIMIAMIPIRYNLL) form a helical membrane-spanning segment. At 845–862 (PRIIEAKYLDVMDAEHRP) the chain is on the cytoplasmic side.

This sequence belongs to the anion exchanger (TC 2.A.31) family. As to quaternary structure, homodimer. In terms of processing, glycosylated. As to expression, expressed in the endothelial cells of the cornea. In the inner ear, is located in fibrocytes underlying the stria vascularis. In the kidney, is expressed in the thin descending limb of Henle loop.

It is found in the cell membrane. The protein localises to the basolateral cell membrane. It catalyses the reaction tetrahydroxoborate(in) + 2 Na(+)(in) = tetrahydroxoborate(out) + 2 Na(+)(out). Functionally, multifunctional transporter with an impact in cell morphology and differentiation. In the presence of borate B(OH)4(-), acts as a voltage-dependent electrogenic Na(+)-coupled B(OH)4(-) cotransporter controlling boron homeostasis. At early stages of stem cell differentiation, participates in synergy with ITGA5-ITGB1 and ITGAV-ITGB3 integrins and BMPR1A to promote cell adhesion and contractility that drives differentiation toward osteogenic commitment while inhibiting adipogenesis. In the absence of B(OH)4(-), acts as a Na(+)-coupled OH(-) or H(+) permeable channel with implications in cellular redox balance. Regulates the oxidative stress response in corneal endothelium by enhancing antioxidant defenses and protecting cells from reactive oxygen species. In response to hypo-osmotic challenge, also acts as water permeable channel at the basolateral cell membrane of corneal endothelial cells and facilitates transendothelial fluid reabsorption in the aqueous humor. In the presence of ammonia, acts as an electrogenic NH3/H(+) cotransporter and may play a role in ammonia transport and reabsorption in renal Henle's loop epithelium. The sequence is that of Solute carrier family 4 member 11 (Slc4a11) from Mus musculus (Mouse).